The sequence spans 557 residues: Potassium-transporting ATPase potassium-binding subunit (557 aa).

Transmembrane regions (helical) follow at residues 1-21 (MEILQIAIILIVFVLLCIPIG), 62-82 (QYIFALLMCNAVPAIIGYIIL), 132-152 (IVITFFMFFAAATGIAVALAF), 176-196 (ILLPLSIIVAIFYIGQGVPQT), 253-273 (VQIITLLLLAGSMVVCFGHMI), 279-299 (AVAIFAAMMVLLLAGAAICFS), 371-391 (IFGGVGVGFMNMIMYAILTVF), 415-435 (LVAFAIIVHPFLILMSSALAL), 482-502 (VSAGVVMFLGRYLSIIILLAV), and 528-548 (VTLIVIIVIIGALTFLPAVAL).

It belongs to the KdpA family. As to quaternary structure, the system is composed of three essential subunits: KdpA, KdpB and KdpC.

It localises to the cell membrane. In terms of biological role, part of the high-affinity ATP-driven potassium transport (or Kdp) system, which catalyzes the hydrolysis of ATP coupled with the electrogenic transport of potassium into the cytoplasm. This subunit binds the extracellular potassium ions and delivers the ions to the membrane domain of KdpB through an intramembrane tunnel. The chain is Potassium-transporting ATPase potassium-binding subunit from Clostridium acetobutylicum (strain ATCC 824 / DSM 792 / JCM 1419 / IAM 19013 / LMG 5710 / NBRC 13948 / NRRL B-527 / VKM B-1787 / 2291 / W).